Consider the following 169-residue polypeptide: GTP-dependent dephospho-CoA kinase (169 aa).

Residues Asp-45, Asp-64, and Glu-121 each contribute to the GTP site.

It belongs to the GTP-dependent DPCK family.

The catalysed reaction is 3'-dephospho-CoA + GTP = GDP + CoA + H(+). The protein operates within cofactor biosynthesis; coenzyme A biosynthesis. Functionally, catalyzes the GTP-dependent phosphorylation of the 3'-hydroxyl group of dephosphocoenzyme A to form coenzyme A (CoA). This is GTP-dependent dephospho-CoA kinase from Methanobrevibacter smithii (strain ATCC 35061 / DSM 861 / OCM 144 / PS).